The sequence spans 751 residues: Zinc finger protein 184 (751 aa).

One can recognise a KRAB domain in the interval 28–99 (VTFKDVIVDF…EPSIPVGTCA (72 aa)). 3 positions are modified to phosphoserine: S117, S122, and S199. Polar residues predominate over residues 191-202 (SNLVTQEPSPEE). The interval 191–212 (SNLVTQEPSPEETSTKRSIKQN) is disordered. K206 is covalently cross-linked (Glycyl lysine isopeptide (Lys-Gly) (interchain with G-Cter in SUMO2)). 19 consecutive C2H2-type zinc fingers follow at residues 222 to 244 (CKCNECGKAFSYCSALIRHQRTH), 250 to 272 (YKCNECEKAFSRSENLINHQRIH), 278 to 300 (YKCDQCGKGFIEGPSLTQHQRIH), 306 to 328 (YKCDECGKAFSQRTHLVQHQRIH), 334 to 356 (YTCNECGKAFSQRGHFMEHQKIH), 362 to 384 (FKCDECDKTFTRSTHLTQHQKIH), 390 to 412 (YKCNECGKAFNGPSTFIRHHMIH), 418 to 440 (YECNECGKAFSQHSNLTQHQKTH), 446 to 468 (YDCAECGKSFSYWSSLAQHLKIH), 474 to 496 (YKCNECGKAFSYCSSLTQHRRIH), 502 to 524 (FECSECGKAFSYLSNLNQHQKTH), 530 to 552 (YECKECGKAFIRSSSLAKHERIH), 558 to 580 (YQCHECGKTFSYGSSLIQHRKIH), 586 to 608 (YKCNECGRAFNQNIHLTQHKRIH), 614 to 636 (YECAECGKAFRHCSSLAQHQKTH), 642 to 664 (YQCNKCEKTFSQSSHLTQHQRIH), 670 to 692 (YKCNECDKAFSRSTHLTEHQNTH), 698 to 720 (YNCNECRKTFSQSTYLIQHQRIH), and 726 to 748 (FGCNDCGKSFRYRSALNKHQRLH).

Belongs to the krueppel C2H2-type zinc-finger protein family. Predominant expression in testis.

It localises to the nucleus. Its function is as follows. May be involved in transcriptional regulation. This chain is Zinc finger protein 184 (ZNF184), found in Homo sapiens (Human).